The primary structure comprises 195 residues: Endoribonuclease YbeY (195 aa).

The Zn(2+) site is built by H152, H156, and H162.

It belongs to the endoribonuclease YbeY family. It depends on Zn(2+) as a cofactor.

The protein localises to the cytoplasm. Functionally, single strand-specific metallo-endoribonuclease involved in late-stage 70S ribosome quality control and in maturation of the 3' terminus of the 16S rRNA. The polypeptide is Endoribonuclease YbeY (Rhodopseudomonas palustris (strain BisB5)).